A 432-amino-acid chain; its full sequence is Non-peptidase homolog YmxG (432 aa).

The first 20 residues, 1-20 (MKKFLITLLLGVFMGLQASA), serve as a signal peptide directing secretion.

The protein belongs to the peptidase M16 family.

The protein resides in the secreted. In terms of biological role, may contribute to the full activity of the protease PqqE. This chain is Non-peptidase homolog YmxG, found in Helicobacter pylori (strain ATCC 700392 / 26695) (Campylobacter pylori).